Reading from the N-terminus, the 375-residue chain is Chaperone protein DnaJ (375 aa).

Residues aspartate 4–glycine 68 form the J domain. The CR-type zinc-finger motif lies at glycine 135–threonine 217. Zn(2+) is bound by residues cysteine 148, cysteine 151, cysteine 165, cysteine 168, cysteine 191, cysteine 194, cysteine 205, and cysteine 208. 4 CXXCXGXG motif repeats span residues cysteine 148 to glycine 155, cysteine 165 to glycine 172, cysteine 191 to glycine 198, and cysteine 205 to glycine 212.

Belongs to the DnaJ family. In terms of assembly, homodimer. Requires Zn(2+) as cofactor.

The protein resides in the cytoplasm. Its function is as follows. Participates actively in the response to hyperosmotic and heat shock by preventing the aggregation of stress-denatured proteins and by disaggregating proteins, also in an autonomous, DnaK-independent fashion. Unfolded proteins bind initially to DnaJ; upon interaction with the DnaJ-bound protein, DnaK hydrolyzes its bound ATP, resulting in the formation of a stable complex. GrpE releases ADP from DnaK; ATP binding to DnaK triggers the release of the substrate protein, thus completing the reaction cycle. Several rounds of ATP-dependent interactions between DnaJ, DnaK and GrpE are required for fully efficient folding. Also involved, together with DnaK and GrpE, in the DNA replication of plasmids through activation of initiation proteins. The polypeptide is Chaperone protein DnaJ (Nostoc punctiforme (strain ATCC 29133 / PCC 73102)).